The chain runs to 132 residues: Ribosome-binding factor A (132 aa).

Belongs to the RbfA family. As to quaternary structure, monomer. Binds 30S ribosomal subunits, but not 50S ribosomal subunits or 70S ribosomes.

It localises to the cytoplasm. In terms of biological role, one of several proteins that assist in the late maturation steps of the functional core of the 30S ribosomal subunit. Associates with free 30S ribosomal subunits (but not with 30S subunits that are part of 70S ribosomes or polysomes). Required for efficient processing of 16S rRNA. May interact with the 5'-terminal helix region of 16S rRNA. This chain is Ribosome-binding factor A, found in Rhizorhabdus wittichii (strain DSM 6014 / CCUG 31198 / JCM 15750 / NBRC 105917 / EY 4224 / RW1) (Sphingomonas wittichii).